The sequence spans 539 residues: GMP synthase [glutamine-hydrolyzing] (539 aa).

Residues 4–203 form the Glutamine amidotransferase type-1 domain; the sequence is KILILDFGSQ…VHDICGCKSD (200 aa). Cys82 functions as the Nucleophile in the catalytic mechanism. Residues His177 and Glu179 contribute to the active site. The GMPS ATP-PPase domain maps to 204–395; that stretch reads WNMPDYIAEA…LGLPHDMVYR (192 aa). 231–237 is an ATP binding site; it reads SGGVDSS.

In terms of assembly, homodimer.

The catalysed reaction is XMP + L-glutamine + ATP + H2O = GMP + L-glutamate + AMP + diphosphate + 2 H(+). It functions in the pathway purine metabolism; GMP biosynthesis; GMP from XMP (L-Gln route): step 1/1. In terms of biological role, catalyzes the synthesis of GMP from XMP. The sequence is that of GMP synthase [glutamine-hydrolyzing] from Herminiimonas arsenicoxydans.